The chain runs to 235 residues: Enolase-phosphatase E1 (235 aa).

Mg(2+)-binding residues include Asp10 and Glu12. Substrate-binding positions include 130–131 and Lys169; that span reads SS. Asp194 contacts Mg(2+).

Belongs to the HAD-like hydrolase superfamily. MasA/MtnC family. In terms of assembly, monomer. Mg(2+) serves as cofactor.

It is found in the cytoplasm. It localises to the nucleus. It catalyses the reaction 5-methylsulfanyl-2,3-dioxopentyl phosphate + H2O = 1,2-dihydroxy-5-(methylsulfanyl)pent-1-en-3-one + phosphate. It functions in the pathway amino-acid biosynthesis; L-methionine biosynthesis via salvage pathway; L-methionine from S-methyl-5-thio-alpha-D-ribose 1-phosphate: step 3/6. Its pathway is amino-acid biosynthesis; L-methionine biosynthesis via salvage pathway; L-methionine from S-methyl-5-thio-alpha-D-ribose 1-phosphate: step 4/6. Bifunctional enzyme that catalyzes the enolization of 2,3-diketo-5-methylthiopentyl-1-phosphate (DK-MTP-1-P) into the intermediate 2-hydroxy-3-keto-5-methylthiopentenyl-1-phosphate (HK-MTPenyl-1-P), which is then dephosphorylated to form the acireductone 1,2-dihydroxy-3-keto-5-methylthiopentene (DHK-MTPene). This chain is Enolase-phosphatase E1, found in Komagataella phaffii (strain GS115 / ATCC 20864) (Yeast).